A 394-amino-acid chain; its full sequence is 4-O-methyl-glucuronoyl methylesterase (394 aa).

An N-terminal signal peptide occupies residues 1 to 18 (MVHLTPALLLASAAFAAA). 3 disulfide bridges follow: cysteine 29–cysteine 63, cysteine 210–cysteine 345, and cysteine 242–cysteine 317. Positions 209–214 (GCSRNG) match the GXSYXG catalytic site motif motif. Serine 211 functions as the Nucleophile in the catalytic mechanism. Substrate-binding residues include lysine 215, glutamine 257, glutamate 265, and tryptophan 308. Catalysis depends on histidine 344, which acts as the Proton donor/acceptor.

This sequence belongs to the carbohydrate esterase 15 (CE15) family.

It is found in the secreted. The catalysed reaction is a 4-O-methyl-alpha-D-glucuronosyl ester derivative + H2O = 4-O-methyl-alpha-D-glucuronate derivative + an alcohol + H(+). Glucuronoyl esterase which may play a significant role in biomass degradation, as it is considered to disconnect hemicellulose from lignin through the hydrolysis of the ester bond between 4-O-methyl-D-glucuronic acid residues of glucuronoxylans and aromatic alcohols of lignin. This is 4-O-methyl-glucuronoyl methylesterase from Neurospora crassa (strain ATCC 24698 / 74-OR23-1A / CBS 708.71 / DSM 1257 / FGSC 987).